The following is a 64-amino-acid chain: Beta-defensin 5 (64 aa).

Residues methionine 1 to serine 23 form the signal peptide. Cystine bridges form between cysteine 32–cysteine 60, cysteine 39–cysteine 53, and cysteine 43–cysteine 61.

The protein belongs to the beta-defensin family.

Its subcellular location is the secreted. In terms of biological role, has antibacterial activity. This is Beta-defensin 5 (Defb5) from Mus musculus (Mouse).